Reading from the N-terminus, the 224-residue chain is ATP synthase subunit a (224 aa).

Transmembrane regions (helical) follow at residues 17 to 37 (LSLNWLSTFLGLLMIPSIYWL), 72 to 92 (IFISLFSLILFNNFMGLFPYI), 99 to 119 (LTLTLSLALPLWLCFMLYGWI), 125 to 145 (MFAHLVPQGTPAILMPFMVCI), 155 to 175 (GTLAVRLTANMIAGHLLLTLL), and 184 to 204 (YLLVTFLLVAQIALLVLESAV).

The protein belongs to the ATPase A chain family. In terms of assembly, F-type ATPases have 2 components, CF(1) - the catalytic core - and CF(0) - the membrane proton channel. CF(1) has five subunits: alpha(3), beta(3), gamma(1), delta(1), epsilon(1). CF(0) has three main subunits: a, b and c.

It is found in the mitochondrion inner membrane. Functionally, mitochondrial membrane ATP synthase (F(1)F(0) ATP synthase or Complex V) produces ATP from ADP in the presence of a proton gradient across the membrane which is generated by electron transport complexes of the respiratory chain. F-type ATPases consist of two structural domains, F(1) - containing the extramembraneous catalytic core and F(0) - containing the membrane proton channel, linked together by a central stalk and a peripheral stalk. During catalysis, ATP synthesis in the catalytic domain of F(1) is coupled via a rotary mechanism of the central stalk subunits to proton translocation. Key component of the proton channel; it may play a direct role in the translocation of protons across the membrane. This is ATP synthase subunit a (mt:ATPase6) from Drosophila yakuba (Fruit fly).